Reading from the N-terminus, the 275-residue chain is NH(3)-dependent NAD(+) synthetase (275 aa).

An ATP-binding site is contributed by 46-53; it reads GISGGQDS. Residue Asp-52 coordinates Mg(2+). A deamido-NAD(+)-binding site is contributed by Arg-140. Residue Thr-160 coordinates ATP. Residue Glu-165 coordinates Mg(2+). Residues Lys-173 and Asp-180 each contribute to the deamido-NAD(+) site. ATP is bound by residues Lys-189 and Thr-211. Residue 260–261 participates in deamido-NAD(+) binding; that stretch reads HK.

It belongs to the NAD synthetase family. In terms of assembly, homodimer.

It carries out the reaction deamido-NAD(+) + NH4(+) + ATP = AMP + diphosphate + NAD(+) + H(+). It participates in cofactor biosynthesis; NAD(+) biosynthesis; NAD(+) from deamido-NAD(+) (ammonia route): step 1/1. Its function is as follows. Catalyzes the ATP-dependent amidation of deamido-NAD to form NAD. Uses ammonia as a nitrogen source. This chain is NH(3)-dependent NAD(+) synthetase, found in Escherichia coli O7:K1 (strain IAI39 / ExPEC).